A 200-amino-acid polypeptide reads, in one-letter code: MKYLHTICLLFIFVARGNSRSCDFCHNIGKDCDGYEEECSSPEDVCGKVLLEISSASLSVRTVHKNCFSSSICKLGQFDVNIGHHSYIRGRINCCEKEPCEDQLFPGLPLSKPNGYYCPGAIGLFTKDSTEYEAICKGTQTKCINIVGHRYEPFPGDISYNLKGCVSSCPLLSLSNATFEQNRNYLEKVECKDAIRLASL.

The N-terminal stretch at 1 to 19 (MKYLHTICLLFIFVARGNS) is a signal peptide. Disulfide bonds link Cys22–Cys46, Cys25–Cys32, Cys39–Cys67, Cys73–Cys94, Cys95–Cys100, Cys118–Cys143, Cys136–Cys165, and Cys169–Cys191. An N-linked (GlcNAc...) asparagine glycan is attached at Asn176.

Belongs to the CNF-like-inhibitor family. As to quaternary structure, occurs as a mixture of oligomers. Tetrameric arrangement appears to be the predominant quaternary structure. In terms of tissue distribution, expressed by the liver.

It is found in the secreted. In terms of biological role, inhibits the enzymatic activity of phospholipase A2 (PA2). The sequence is that of Phospholipase A2 inhibitor LNF1 from Lachesis muta muta (Bushmaster).